Reading from the N-terminus, the 275-residue chain is tRNA pseudouridine synthase A (275 aa).

Asp-72 serves as the catalytic Nucleophile. A substrate-binding site is contributed by Tyr-133.

It belongs to the tRNA pseudouridine synthase TruA family. In terms of assembly, homodimer.

It carries out the reaction uridine(38/39/40) in tRNA = pseudouridine(38/39/40) in tRNA. Functionally, formation of pseudouridine at positions 38, 39 and 40 in the anticodon stem and loop of transfer RNAs. The chain is tRNA pseudouridine synthase A from Gluconobacter oxydans (strain 621H) (Gluconobacter suboxydans).